Reading from the N-terminus, the 265-residue chain is Metallo-beta-lactamase VIM-7 (265 aa).

The N-terminal stretch at 1–17 (MFQIRSFLVGISAFVMA) is a signal peptide. The Zn(2+) site is built by H113, H115, D117, H178, C197, and H239.

The protein belongs to the metallo-beta-lactamase superfamily. Class-B beta-lactamase family. Monomer. Zn(2+) is required as a cofactor.

It localises to the periplasm. It catalyses the reaction a beta-lactam + H2O = a substituted beta-amino acid. Class B beta-lactamase which confers resistance to the beta-lactam antibiotics, including penicillins, cephalosporins and carbapenems. Acts via hydrolysis of the beta-lactam ring. Has penicillin-, cephalosporin- and carbapenem-hydrolyzing activities. The chain is Metallo-beta-lactamase VIM-7 from Pseudomonas aeruginosa.